The chain runs to 167 residues: Lipoprotein signal peptidase (167 aa).

3 helical membrane passes run 10 to 30 (LIWLLLSIAIIALDQATKAWV), 68 to 88 (WQMWLFIALALGISGLLTFWL), and 98 to 118 (SALPYALIIGGGIGNVIDRFL). Residues Asp-124 and Asp-142 contribute to the active site. Residues 138–158 (FNLADSAIVAGAIGIGLLSLF) traverse the membrane as a helical segment.

It belongs to the peptidase A8 family.

The protein resides in the cell inner membrane. The catalysed reaction is Release of signal peptides from bacterial membrane prolipoproteins. Hydrolyzes -Xaa-Yaa-Zaa-|-(S,diacylglyceryl)Cys-, in which Xaa is hydrophobic (preferably Leu), and Yaa (Ala or Ser) and Zaa (Gly or Ala) have small, neutral side chains.. It participates in protein modification; lipoprotein biosynthesis (signal peptide cleavage). This protein specifically catalyzes the removal of signal peptides from prolipoproteins. The polypeptide is Lipoprotein signal peptidase (Xylella fastidiosa (strain 9a5c)).